We begin with the raw amino-acid sequence, 155 residues long: Large ribosomal subunit protein uL22 (155 aa).

The protein belongs to the universal ribosomal protein uL22 family. Part of the 50S ribosomal subunit.

Functionally, this protein binds specifically to 23S rRNA. It makes multiple contacts with different domains of the 23S rRNA in the assembled 50S subunit and ribosome. The globular domain of the protein is located near the polypeptide exit tunnel on the outside of the subunit, while an extended beta-hairpin is found that lines the wall of the exit tunnel in the center of the 70S ribosome. The polypeptide is Large ribosomal subunit protein uL22 (Pyrococcus furiosus (strain ATCC 43587 / DSM 3638 / JCM 8422 / Vc1)).